The primary structure comprises 184 residues: MSWRSEHIWIELIAGSRKISNFCWAIILFLGSLGFLLIGISSYLDRNLISLFPSQQILFFPQGIVMSFYGLAGLFISSYLWCTISWNVGSGYDRFDRKEGIVCIFRWGFPGKNRRILLRLFMKDIQSIRIEVKEGFYARRVLYMEIRGQGAIPLTRTDENLTPREIEQKAAELAYFLRVPIEVF.

2 helical membrane-spanning segments follow: residues 22–42 and 57–77; these read FCWA…GISS and ILFF…LFIS.

This sequence belongs to the Ycf4 family.

It localises to the plastid. It is found in the chloroplast thylakoid membrane. Seems to be required for the assembly of the photosystem I complex. The protein is Photosystem I assembly protein Ycf4 of Populus trichocarpa (Western balsam poplar).